Reading from the N-terminus, the 208-residue chain is Flavin-dependent thymidylate synthase (208 aa).

The region spanning Met1–His208 is the ThyX domain. Residues Ser50 and Arg74 to Arg76 contribute to the FAD site. Residues Glu71 to Arg74, Ser84 to Arg86, and Lys147 contribute to the dUMP site. The ThyX motif signature appears at Arg74–Ser84. FAD contacts are provided by residues Asn163 to Arg165 and Asn169. Position 174 (Arg174) interacts with dUMP. Arg174 serves as the catalytic Involved in ionization of N3 of dUMP, leading to its activation.

It belongs to the thymidylate synthase ThyX family. As to quaternary structure, homotetramer. FAD serves as cofactor.

It carries out the reaction dUMP + (6R)-5,10-methylene-5,6,7,8-tetrahydrofolate + NADPH + H(+) = dTMP + (6S)-5,6,7,8-tetrahydrofolate + NADP(+). It functions in the pathway pyrimidine metabolism; dTTP biosynthesis. In terms of biological role, catalyzes the reductive methylation of 2'-deoxyuridine-5'-monophosphate (dUMP) to 2'-deoxythymidine-5'-monophosphate (dTMP) while utilizing 5,10-methylenetetrahydrofolate (mTHF) as the methyl donor, and NADPH and FADH(2) as the reductant. In Helicobacter pylori (strain J99 / ATCC 700824) (Campylobacter pylori J99), this protein is Flavin-dependent thymidylate synthase.